A 358-amino-acid chain; its full sequence is Probable D-xylulose reductase A (358 aa).

Cys-47, His-72, and Glu-73 together coordinate Zn(2+). Residue 182–187 (GAGPVG) participates in NAD(+) binding.

This sequence belongs to the zinc-containing alcohol dehydrogenase family. Requires Zn(2+) as cofactor.

It catalyses the reaction xylitol + NAD(+) = D-xylulose + NADH + H(+). It participates in carbohydrate degradation; L-arabinose degradation via L-arabinitol; D-xylulose 5-phosphate from L-arabinose (fungal route): step 4/5. In terms of biological role, xylitol dehydrogenase which catalyzes the conversion of xylitol to D-xylulose. Xylose is a major component of hemicelluloses such as xylan. Most fungi utilize D-xylose via three enzymatic reactions, xylose reductase (XR), xylitol dehydrogenase (XDH), and xylulokinase, to form xylulose 5-phosphate, which enters pentose phosphate pathway. This chain is Probable D-xylulose reductase A (xdhA), found in Aspergillus niger (strain ATCC MYA-4892 / CBS 513.88 / FGSC A1513).